The sequence spans 107 residues: MTDFTLSDLEKIVATRARAAPEESWTAKLVAAGQTKAAKKLGEEAVETVIAAIGEDRKNLVDESADLLYHLMVVLNIAAVPLQDVMSELARRTSQSGLQEKANRQNP.

The protein belongs to the PRA-PH family.

It localises to the cytoplasm. It carries out the reaction 1-(5-phospho-beta-D-ribosyl)-ATP + H2O = 1-(5-phospho-beta-D-ribosyl)-5'-AMP + diphosphate + H(+). Its pathway is amino-acid biosynthesis; L-histidine biosynthesis; L-histidine from 5-phospho-alpha-D-ribose 1-diphosphate: step 2/9. In Rhizobium meliloti (strain 1021) (Ensifer meliloti), this protein is Phosphoribosyl-ATP pyrophosphatase (hisE).